A 663-amino-acid polypeptide reads, in one-letter code: MIDRKDNNQFHLVSKYEPSGDQPEAIEALVDNIEGGEKAQILKGATGTGKTYTMSQVIQKVNKPTLVIAHNKTLAGQLYGEFKEFFPDNAVEYFVSYYDYYQPEAYVPSSDTYIEKDSSVNDEIDKLRHSATSALLERNDVIVVASVSCIYGLGSPKEYADSVVSLRPSQEISRDQLLNDLVDIQFERNDIDFQRGRFRVRGDVVEIFPASRDEHAFRVEFFGDEIDRIREIESLTGRVLGEVDHLAIFPATHFMTNDEHMEVAIAKIQKEMKEQVRLFEAEGKLIEAQRIRQRTEYDVEMLREMGYTSGVENYSRHMDGRSEGEPPYTLLDFFPEDFLIMIDESHMTMGQIKGMYNGDRSRKEMLVNYGFRLPSALDNRPLRREEFESHVHQIVYVSATPGDYEMEQTDTVIEQIIRPTGLLDPEVEVRPTMGQMDDLLGEINTRADKGERTFITTLTKKMAEDLTDYLKEMGVKVKYMHSDIKTLERTEIIRDLRLGVFDVLIGINLLREGIDVPEVSLVAILDADKEGFLRNERGLIQTIGRAARNSQGHVIMYADTVTQSMRRAIDETHRRRQIQMAYNEEHGIIPQTIKKDIRDLIAITKANDSEVAEEAVDYNAMTKSERQEAIKKLQKQMQEAAELLDFELAAQIRDMVLELKAMD.

The 158-residue stretch at 31-188 (DNIEGGEKAQ…NDLVDIQFER (158 aa)) folds into the Helicase ATP-binding domain. Position 44 to 51 (44 to 51 (GATGTGKT)) interacts with ATP. Residues 97 to 120 (YYDYYQPEAYVPSSDTYIEKDSSV) carry the Beta-hairpin motif. The 167-residue stretch at 435–601 (QMDDLLGEIN…TIKKDIRDLI (167 aa)) folds into the Helicase C-terminal domain. A UVR domain is found at 627–662 (QEAIKKLQKQMQEAAELLDFELAAQIRDMVLELKAM).

The protein belongs to the UvrB family. As to quaternary structure, forms a heterotetramer with UvrA during the search for lesions. Interacts with UvrC in an incision complex.

It localises to the cytoplasm. Its function is as follows. The UvrABC repair system catalyzes the recognition and processing of DNA lesions. A damage recognition complex composed of 2 UvrA and 2 UvrB subunits scans DNA for abnormalities. Upon binding of the UvrA(2)B(2) complex to a putative damaged site, the DNA wraps around one UvrB monomer. DNA wrap is dependent on ATP binding by UvrB and probably causes local melting of the DNA helix, facilitating insertion of UvrB beta-hairpin between the DNA strands. Then UvrB probes one DNA strand for the presence of a lesion. If a lesion is found the UvrA subunits dissociate and the UvrB-DNA preincision complex is formed. This complex is subsequently bound by UvrC and the second UvrB is released. If no lesion is found, the DNA wraps around the other UvrB subunit that will check the other stand for damage. This is UvrABC system protein B from Streptococcus mutans serotype c (strain ATCC 700610 / UA159).